A 513-amino-acid polypeptide reads, in one-letter code: Bifunctional purine biosynthesis protein PurH (513 aa).

Residues 1–144 (MSKRALISVS…KNHERVGIVV (144 aa)) form the MGS-like domain.

This sequence belongs to the PurH family.

The catalysed reaction is (6R)-10-formyltetrahydrofolate + 5-amino-1-(5-phospho-beta-D-ribosyl)imidazole-4-carboxamide = 5-formamido-1-(5-phospho-D-ribosyl)imidazole-4-carboxamide + (6S)-5,6,7,8-tetrahydrofolate. It catalyses the reaction IMP + H2O = 5-formamido-1-(5-phospho-D-ribosyl)imidazole-4-carboxamide. It participates in purine metabolism; IMP biosynthesis via de novo pathway; 5-formamido-1-(5-phospho-D-ribosyl)imidazole-4-carboxamide from 5-amino-1-(5-phospho-D-ribosyl)imidazole-4-carboxamide (10-formyl THF route): step 1/1. The protein operates within purine metabolism; IMP biosynthesis via de novo pathway; IMP from 5-formamido-1-(5-phospho-D-ribosyl)imidazole-4-carboxamide: step 1/1. In Moorella thermoacetica (strain ATCC 39073 / JCM 9320), this protein is Bifunctional purine biosynthesis protein PurH.